We begin with the raw amino-acid sequence, 20 residues long: Large ribosomal subunit protein uL5 (20 aa).

Belongs to the universal ribosomal protein uL5 family. Part of the 50S ribosomal subunit; part of the 5S rRNA/L5/L18/L25 subcomplex. Contacts the 5S rRNA and the P site tRNA. Forms a bridge to the 30S subunit in the 70S ribosome.

Its function is as follows. This is one of the proteins that bind and probably mediate the attachment of the 5S RNA into the large ribosomal subunit, where it forms part of the central protuberance. In the 70S ribosome it contacts protein S13 of the 30S subunit (bridge B1b), connecting the two subunits; this bridge is implicated in subunit movement. Contacts the P site tRNA; the 5S rRNA and some of its associated proteins might help stabilize positioning of ribosome-bound tRNAs. The chain is Large ribosomal subunit protein uL5 (rplE) from Bacillus cereus.